The sequence spans 111 residues: Large ribosomal subunit protein uL23 (111 aa).

It belongs to the universal ribosomal protein uL23 family. Part of the 50S ribosomal subunit. Contacts protein L29, and trigger factor when it is bound to the ribosome.

Functionally, one of the early assembly proteins it binds 23S rRNA. One of the proteins that surrounds the polypeptide exit tunnel on the outside of the ribosome. Forms the main docking site for trigger factor binding to the ribosome. The polypeptide is Large ribosomal subunit protein uL23 (Chlamydia trachomatis serovar A (strain ATCC VR-571B / DSM 19440 / HAR-13)).